The primary structure comprises 295 residues: Homeobox protein XHOX-7.1 (295 aa).

Disordered stretches follow at residues 75-115 (RKPG…PISL) and 134-175 (KPES…KPRT). Polar residues predominate over residues 84–97 (SSPTGSPLAGTSHS). Residues 141–153 (SSWIQSPSFSPSP) are compositionally biased toward low complexity. Over residues 164 to 174 (LRKHKTNRKPR) the composition is skewed to basic residues. Residues 170–229 (NRKPRTPFTTSQLLALERKFRQKQYLSIAERAEFSSSLNLTETQVKIWFQNRRAKAKRLQ) constitute a DNA-binding region (homeobox).

It belongs to the Msh homeobox family.

It is found in the nucleus. The sequence is that of Homeobox protein XHOX-7.1 from Xenopus laevis (African clawed frog).